The chain runs to 317 residues: Malate dehydrogenase (317 aa).

Residues 13 to 18 (GAGNIG) and aspartate 38 each bind NAD(+). Substrate is bound by residues arginine 87 and arginine 93. Residues asparagine 100 and 123–125 (VTN) each bind NAD(+). Residues asparagine 125 and arginine 156 each coordinate substrate. Residue histidine 180 is the Proton acceptor of the active site.

Belongs to the LDH/MDH superfamily. MDH type 3 family.

The enzyme catalyses (S)-malate + NAD(+) = oxaloacetate + NADH + H(+). In terms of biological role, catalyzes the reversible oxidation of malate to oxaloacetate. The polypeptide is Malate dehydrogenase (Anaplasma marginale (strain Florida)).